Here is a 428-residue protein sequence, read N- to C-terminus: Adenylosuccinate synthetase (428 aa).

GTP contacts are provided by residues 12–18 and 40–42; these read GDEGKGK and GHS. Aspartate 13 serves as the catalytic Proton acceptor. Residues aspartate 13 and glycine 40 each coordinate Mg(2+). IMP contacts are provided by residues 13 to 16, 38 to 41, threonine 128, arginine 142, glutamine 223, threonine 238, and arginine 302; these read DEGK and NAGH. Histidine 41 acts as the Proton donor in catalysis. Residue 298-304 coordinates substrate; it reads VTTGRPR. Residues arginine 304, 330-332, and 412-414 each bind GTP; these read KLD and GTG.

This sequence belongs to the adenylosuccinate synthetase family. Homodimer. Requires Mg(2+) as cofactor.

Its subcellular location is the cytoplasm. The enzyme catalyses IMP + L-aspartate + GTP = N(6)-(1,2-dicarboxyethyl)-AMP + GDP + phosphate + 2 H(+). It participates in purine metabolism; AMP biosynthesis via de novo pathway; AMP from IMP: step 1/2. Its function is as follows. Plays an important role in the de novo pathway of purine nucleotide biosynthesis. Catalyzes the first committed step in the biosynthesis of AMP from IMP. The protein is Adenylosuccinate synthetase of Bifidobacterium longum subsp. infantis (strain ATCC 15697 / DSM 20088 / JCM 1222 / NCTC 11817 / S12).